A 416-amino-acid chain; its full sequence is Protein-glutamine gamma-glutamyltransferase (416 aa).

Residues 1-29 constitute a signal peptide (tat-type signal); it reads MHKRRRLLAFATVGAVICTAGFTPSVSQA. The propeptide occupies 30–85; that stretch reads ASSGDGEEKGSYAETHGLTADDVESINALNERALTLGQPGKPPKELPPSASAPSRA. The disordered stretch occupies residues 64–103; the sequence is TLGQPGKPPKELPPSASAPSRAPSDDRETPPAEPLDRMPE. Residues 76-85 are compositionally biased toward low complexity; it reads PPSASAPSRA. Over residues 86 to 103 the composition is skewed to basic and acidic residues; the sequence is PSDDRETPPAEPLDRMPE. The active site involves Cys-149. A disordered region spans residues 290–331; the sequence is GQDQRGSSDKRKYGDPEAFRPDQGTGLVDMSKDRSIPRSPAK. The span at 295 to 309 shows a compositional bias: basic and acidic residues; that stretch reads GSSDKRKYGDPEAFR. Residues Asp-340 and His-359 contribute to the active site.

The protein belongs to the bacterial TGase family. Predicted to be exported by the Tat system. The position of the signal peptide cleavage has not been experimentally proven.

It carries out the reaction L-glutaminyl-[protein] + L-lysyl-[protein] = [protein]-L-lysyl-N(6)-5-L-glutamyl-[protein] + NH4(+). Functionally, catalyzes the cross-linking of proteins and the conjugation of polyamines to proteins. The chain is Protein-glutamine gamma-glutamyltransferase from Streptomyces cinnamoneus (Streptoverticillium cinnamoneum).